Consider the following 434-residue polypeptide: UDP-N-acetylglucosamine 1-carboxyvinyltransferase 1 (434 aa).

Residue 22–23 (KN) participates in phosphoenolpyruvate binding. Arg-93 provides a ligand contact to UDP-N-acetyl-alpha-D-glucosamine. The Proton donor role is filled by Cys-117. The residue at position 117 (Cys-117) is a 2-(S-cysteinyl)pyruvic acid O-phosphothioketal. UDP-N-acetyl-alpha-D-glucosamine-binding positions include 122–126 (RPIDQ), Asp-306, and Val-328.

Belongs to the EPSP synthase family. MurA subfamily.

The protein resides in the cytoplasm. The enzyme catalyses phosphoenolpyruvate + UDP-N-acetyl-alpha-D-glucosamine = UDP-N-acetyl-3-O-(1-carboxyvinyl)-alpha-D-glucosamine + phosphate. The protein operates within cell wall biogenesis; peptidoglycan biosynthesis. Functionally, cell wall formation. Adds enolpyruvyl to UDP-N-acetylglucosamine. The protein is UDP-N-acetylglucosamine 1-carboxyvinyltransferase 1 of Bacillus cereus (strain ATCC 10987 / NRS 248).